A 629-amino-acid chain; its full sequence is tRNA uridine 5-carboxymethylaminomethyl modification enzyme MnmG (629 aa).

FAD is bound at residue 13–18 (GGGHAG). 273–287 (GPRYCPSIEDKITRF) provides a ligand contact to NAD(+).

This sequence belongs to the MnmG family. Homodimer. Heterotetramer of two MnmE and two MnmG subunits. The cofactor is FAD.

Its subcellular location is the cytoplasm. Its function is as follows. NAD-binding protein involved in the addition of a carboxymethylaminomethyl (cmnm) group at the wobble position (U34) of certain tRNAs, forming tRNA-cmnm(5)s(2)U34. This chain is tRNA uridine 5-carboxymethylaminomethyl modification enzyme MnmG, found in Aeromonas salmonicida (strain A449).